A 99-amino-acid chain; its full sequence is High mobility group nucleosome-binding domain-containing protein 3 (99 aa).

Composition is skewed to basic and acidic residues over residues 1–25 and 39–53; these read MPKR…EPTR and PESK…KEPG. Positions 1–99 are disordered; that stretch reads MPKRKSPENT…RTESIEKEGE (99 aa). Phosphoserine is present on S6. T10 is modified (phosphothreonine). S78 and S93 each carry phosphoserine. Basic and acidic residues predominate over residues 83 to 99; that stretch reads TKVEEAQRTESIEKEGE.

Belongs to the HMGN family. In terms of assembly, interacts with the ligand binding domain of the thyroid receptor (TR) (in vitro). Requires the presence of thyroid hormone for its interaction. Interacts with transcriptional regulator SEHBP. Interacts with nucleosomes. As to expression, expressed in the brain, eye, prostate, thyroid, kidney, testis, glial cells and insulin-producing cells of the Langerhans pancreatic islets. In the brain, expressed in the lateral olfactory tract, anterior commissure, corpus callosum, internal capsule, fornix, stria medullans, optic tract, axon bundles, Purkinje cell layer and granular layer of the cerebellum. In retina, expressed in the nuclei of cells in the inner nuclear layer including amacrine, bipolar and horizontal neurons and in the nuclei of ganglion neurons. Detected at low levels in the liver.

It localises to the nucleus. Binds to nucleosomes, regulating chromatin structure and consequently, chromatin-dependent processes such as transcription, DNA replication and DNA repair. Affects both insulin and glucagon levels and modulates the expression of pancreatic genes involved in insulin secretion. Regulates the expression of the glucose transporter SLC2A2 by binding specifically to its promoter region and recruiting PDX1 and additional transcription factors. Regulates the expression of SLC6A9, a glycine transporter which regulates the glycine concentration in synaptic junctions in the central nervous system, by binding to its transcription start site. May play a role in ocular development and astrocyte function. The sequence is that of High mobility group nucleosome-binding domain-containing protein 3 (Hmgn3) from Mus musculus (Mouse).